We begin with the raw amino-acid sequence, 571 residues long: Glutamine--tRNA ligase (571 aa).

The 'HIGH' region signature appears at 35-45; that stretch reads PEPNGYLHIGH. ATP is bound by residues 36–38 and 42–48; these read EPN and HIGHAKS. Residues D68 and Y213 each coordinate L-glutamine. Residues T232, 262–263, and 270–272 contribute to the ATP site; these read RL and LSK. A 'KMSKS' region motif is present at residues 269 to 273; the sequence is ILSKR.

It belongs to the class-I aminoacyl-tRNA synthetase family. As to quaternary structure, monomer.

It is found in the cytoplasm. The enzyme catalyses tRNA(Gln) + L-glutamine + ATP = L-glutaminyl-tRNA(Gln) + AMP + diphosphate. In Buchnera aphidicola subsp. Acyrthosiphon pisum (strain 5A), this protein is Glutamine--tRNA ligase.